The chain runs to 312 residues: MVEFEDQLVFNSISARALKAYFTAKINEMVDELVTRKCPQKKKSQAKKPEVRIPVDLVKSSFVKKFGLCNYGGILISLINSLVENNFFTKNGKLDDTGKKELVLTDVEKRILNTVDKSSPLYIDISDVKVLAARLKRSATQFNFNGHTYHLENDKIEDLINQLVKDESIQLDEKSSIKDSMYVIPDELIDVLKTRSFRSPQVKDNIISSTRLYDYFTRVTKRDESSIYVILKDPRIASILSLETVEMGAFMYTKHSMLTNAISSEVDRYSEKFQESFYEDIAEFVEENERVDVSRVVECLTVPNITISSNAE.

Belongs to the orthopoxvirus OPG077 family.

The protein resides in the virion. In terms of biological role, DNA-binding protein which binds to the hairpin form of the viral telomeric sequence. Required for the production of mature virions (MV). This Variola virus (isolate Human/India/Ind3/1967) (VARV) protein is Telomere-binding protein OPG077 (OPG077).